The following is a 230-amino-acid chain: Orotidine 5'-phosphate decarboxylase (230 aa).

Residues Asp-10, Lys-31, 58–67, Thr-117, Arg-179, Gln-188, Gly-208, and Arg-209 contribute to the substrate site; that span reads DLKLHDIPNT. Residue Lys-60 is the Proton donor of the active site. A disordered region spans residues 177–196; sequence GIRPKDASSDDQKRITTPED. Residues 179–196 show a composition bias toward basic and acidic residues; it reads RPKDASSDDQKRITTPED.

This sequence belongs to the OMP decarboxylase family. Type 1 subfamily. In terms of assembly, homodimer.

The enzyme catalyses orotidine 5'-phosphate + H(+) = UMP + CO2. The protein operates within pyrimidine metabolism; UMP biosynthesis via de novo pathway; UMP from orotate: step 2/2. Functionally, catalyzes the decarboxylation of orotidine 5'-monophosphate (OMP) to uridine 5'-monophosphate (UMP). This chain is Orotidine 5'-phosphate decarboxylase, found in Staphylococcus saprophyticus subsp. saprophyticus (strain ATCC 15305 / DSM 20229 / NCIMB 8711 / NCTC 7292 / S-41).